The sequence spans 426 residues: Glutamate-1-semialdehyde 2,1-aminomutase (426 aa).

Lys-265 bears the N6-(pyridoxal phosphate)lysine mark.

The protein belongs to the class-III pyridoxal-phosphate-dependent aminotransferase family. HemL subfamily. In terms of assembly, homodimer. Requires pyridoxal 5'-phosphate as cofactor.

It localises to the cytoplasm. The enzyme catalyses (S)-4-amino-5-oxopentanoate = 5-aminolevulinate. The protein operates within porphyrin-containing compound metabolism; protoporphyrin-IX biosynthesis; 5-aminolevulinate from L-glutamyl-tRNA(Glu): step 2/2. The sequence is that of Glutamate-1-semialdehyde 2,1-aminomutase from Neisseria gonorrhoeae (strain ATCC 700825 / FA 1090).